We begin with the raw amino-acid sequence, 461 residues long: MIGSVLYLVNSQMDTLSIITWLLVILPFPILGTLFLIYTKQDWGYRELKSLIKKSTQAIKPYFQYDQRILYKLKESHARTYNLAQYLHRSGGFPVYKNTKVTYFPNGQSKFEEMKKQLLKAEKFIFLEYFIIAEGLMWGEILSILEQKVQEGVEVRVMYDGMLELSTLSFDYAKRLEKIGIKAKVFSPITPFVSTYYNYRDHRKILVIDNKVAFNGGINLADEYINQIERFGYWKDTAVMLEGEGVASFTLMFLQMWSTTNKDYEFAPYLTQNFHEIVANGYVIPYSDSPLDHEKVGENVYIDILNQARDYVYIMTPYLILDSEMEHALQFAAERGVDVKIIMPGIPDKKVPFALAKRYFPALLDAGVKIYEFTPGFVHAKVFIADDIKAVVGTINLDYRSLYHHFECATYMYQTDCLVDIKADFKETLKQSRRVTRSTLQKEKISTKLIGLVVKLVAPLL.

Helical transmembrane passes span 18–38 (IITW…FLIY) and 124–144 (FIFL…ILSI). PLD phosphodiesterase domains are found at residues 197-224 (YNYR…ADEY) and 374-401 (TPGF…DYRS).

The protein belongs to the phospholipase D family. Cardiolipin synthase subfamily.

The protein resides in the cell membrane. This is an uncharacterized protein from Streptococcus mutans serotype c (strain ATCC 700610 / UA159).